A 293-amino-acid chain; its full sequence is Heterogeneous nuclear ribonucleoprotein C-like 4 (293 aa).

An RRM domain is found at 16 to 87; it reads SRVFIGNLNT…QVVDINLAAE (72 aa). Disordered stretches follow at residues 140–177 and 208–293; these read VVPSKRQRISGNTSRRGKSGFNSKSGKRGSSKSGKLKG and HCKQ…QDDS. Residues 177–208 are a coiled coil; it reads GDDLQAIKQELTQIKQKVDSLLENLEKIEKEH. Basic and acidic residues-rich tracts occupy residues 208–222 and 229–240; these read HCKQGVEVKNAKSEE and SKKDKTHVKMES. Positions 242–263 are enriched in acidic residues; that stretch reads GGADDSVEEGDLLCDDDNEDQG. The segment covering 269–293 has biased composition (basic and acidic residues); the sequence is LIKDDEKGAEEGEDDRDRANGQDDS.

This sequence belongs to the RRM HNRPC family. RALY subfamily.

Its subcellular location is the nucleus. The polypeptide is Heterogeneous nuclear ribonucleoprotein C-like 4 (Homo sapiens (Human)).